Consider the following 294-residue polypeptide: MEFRQLRYFIAVAEEGNIGAAARRLHISQPPITRQIQALEQDLGVVLFERTHRGVELTAAGTTFLEDARRLLHVTEISRVRSRAASRGEIGELRVAYFGTVVLHTLPLLLRQLLSVAPSATVSLTQMSKNRQIEALDAGTIDIGFGRFYPYQEGVVVRNVTNERLFLGAQKSRARSFGEQVHCSALRNEPFILFPREGRPSFADEVIGVFKNARVEPKVVAIVEDVNAAMALALAGVGVTIVPETVAMISWPDFGFTELVGSKATVPVSCIYRHDHIAPILKTFLNLLPIRESQ.

One can recognise an HTH lysR-type domain in the interval Met-1–Thr-58. Positions Ile-18 to Gln-37 form a DNA-binding region, H-T-H motif.

The protein belongs to the LysR transcriptional regulatory family.

The protein resides in the cytoplasm. In terms of biological role, involved in regulation of chlorinated catechol metabolism. Transcriptional activator of the clcABD chlorocatechol oxidative operon. The sequence is that of HTH-type transcriptional regulator ClcR (clcR) from Pseudomonas putida (Arthrobacter siderocapsulatus).